Consider the following 301-residue polypeptide: UDP-N-acetylenolpyruvoylglucosamine reductase 1 (301 aa).

An FAD-binding PCMH-type domain is found at Lys29–Gly196. Residue Arg174 is part of the active site. The active-site Proton donor is the Ser225. Residue Glu295 is part of the active site.

Belongs to the MurB family. It depends on FAD as a cofactor.

It is found in the cytoplasm. The catalysed reaction is UDP-N-acetyl-alpha-D-muramate + NADP(+) = UDP-N-acetyl-3-O-(1-carboxyvinyl)-alpha-D-glucosamine + NADPH + H(+). Its pathway is cell wall biogenesis; peptidoglycan biosynthesis. In terms of biological role, cell wall formation. This chain is UDP-N-acetylenolpyruvoylglucosamine reductase 1, found in Bacillus thuringiensis subsp. konkukian (strain 97-27).